Reading from the N-terminus, the 431-residue chain is Glutamate-1-semialdehyde 2,1-aminomutase 1 (431 aa).

At Lys268 the chain carries N6-(pyridoxal phosphate)lysine.

It belongs to the class-III pyridoxal-phosphate-dependent aminotransferase family. HemL subfamily. Homodimer. Pyridoxal 5'-phosphate serves as cofactor.

It is found in the cytoplasm. The enzyme catalyses (S)-4-amino-5-oxopentanoate = 5-aminolevulinate. It functions in the pathway porphyrin-containing compound metabolism; protoporphyrin-IX biosynthesis; 5-aminolevulinate from L-glutamyl-tRNA(Glu): step 2/2. This is Glutamate-1-semialdehyde 2,1-aminomutase 1 from Bacillus pumilus (strain SAFR-032).